Here is a 942-residue protein sequence, read N- to C-terminus: Lambda-carrageenase (942 aa).

Residues 1–25 (MKIKILSAMIASSLLIGCVIPTVKA) form the signal peptide.

Monomer.

It localises to the secreted. It catalyses the reaction Endohydrolysis of (1-&gt;4)-beta-linkages in the backbone of lambda-carrageenan, resulting in the tetrasaccharide alpha-D-Galp2,6S2-(1-&gt;3)-beta-D-Galp2S-(1-&gt;4)-alpha-D-Galp2,6S2-(1-&gt;3)-D-Galp2S.. Hydrolyzes lambda-carrageenan with inversion of anomeric configuration. Does not hydrolyze iota- and kappa-carrageenans, agarose or porphyran. The chain is Lambda-carrageenase from Pseudoalteromonas sp.